The primary structure comprises 310 residues: GMP synthase [glutamine-hydrolyzing] subunit B (310 aa).

Residues 1–187 form the GMPS ATP-PPase domain; it reads MSFSDYISRI…LGLPTDIQPF (187 aa). 27–33 provides a ligand contact to ATP; it reads SGGQDSS.

As to quaternary structure, heterodimer composed of a glutamine amidotransferase subunit (A) and a GMP-binding subunit (B).

The enzyme catalyses XMP + L-glutamine + ATP + H2O = GMP + L-glutamate + AMP + diphosphate + 2 H(+). The protein operates within purine metabolism; GMP biosynthesis; GMP from XMP (L-Gln route): step 1/1. Catalyzes the synthesis of GMP from XMP. The polypeptide is GMP synthase [glutamine-hydrolyzing] subunit B (guaAB) (Thermoplasma volcanium (strain ATCC 51530 / DSM 4299 / JCM 9571 / NBRC 15438 / GSS1)).